A 274-amino-acid polypeptide reads, in one-letter code: Diaminopimelate epimerase (274 aa).

Substrate is bound by residues Asn-11, Gln-44, and Asn-64. Residue Cys-73 is the Proton donor of the active site. Residues 74 to 75, Asn-157, Asn-190, and 208 to 209 contribute to the substrate site; these read GN and ER. The Proton acceptor role is filled by Cys-217. 218 to 219 serves as a coordination point for substrate; sequence GS.

It belongs to the diaminopimelate epimerase family. In terms of assembly, homodimer.

It is found in the cytoplasm. The enzyme catalyses (2S,6S)-2,6-diaminopimelate = meso-2,6-diaminopimelate. The protein operates within amino-acid biosynthesis; L-lysine biosynthesis via DAP pathway; DL-2,6-diaminopimelate from LL-2,6-diaminopimelate: step 1/1. In terms of biological role, catalyzes the stereoinversion of LL-2,6-diaminopimelate (L,L-DAP) to meso-diaminopimelate (meso-DAP), a precursor of L-lysine and an essential component of the bacterial peptidoglycan. This chain is Diaminopimelate epimerase, found in Glaesserella parasuis serovar 5 (strain SH0165) (Haemophilus parasuis).